Here is a 1105-residue protein sequence, read N- to C-terminus: Serine/threonine-protein kinase Warts (1105 aa).

A compositionally biased stretch (polar residues) spans 33–54 (VQNNHRNNQNYTPLRYTATNGR). Disordered regions lie at residues 33-81 (VQNN…APDV), 145-253 (CSPA…TQNG), 273-362 (GGGS…YQAR), 383-462 (QTAV…EPPS), and 514-643 (AQRE…RKEF). Positions 69–81 (MEPPPSASPAPDV) are enriched in pro residues. Positions 242–253 (QRGNSPVITQNG) are enriched in polar residues. Over residues 307–320 (SMQSRQSPTQSQQS) the composition is skewed to low complexity. Polar residues predominate over residues 325–343 (SPSSGIYSATSAGSPSPIT). 2 stretches are compositionally biased toward low complexity: residues 387-400 (APQS…SNSP) and 415-437 (AAVV…QHQQ). Residues 515 to 533 (QRERDQRERDQRERERDQQ) are compositionally biased toward basic and acidic residues. Composition is skewed to low complexity over residues 551 to 576 (QSNN…SNSN) and 589 to 616 (NNNS…SSTS). Positions 627–643 (PERKKISKEKEEERKEF) are enriched in basic and acidic residues. Positions 719 to 1020 (FVKLKPIGVG…VDEVKSHDFF (302 aa)) constitute a Protein kinase domain. ATP-binding positions include 725–733 (IGVGAFGEV) and K749. The Proton acceptor role is filled by D843. Disordered regions lie at residues 881–900 (GNHS…ENGP) and 1038–1070 (EIKH…DDVD). The 71-residue stretch at 1021 to 1091 (KGIDFADMRK…FTFRRFFDDK (71 aa)) folds into the AGC-kinase C-terminal domain.

It belongs to the protein kinase superfamily. AGC Ser/Thr protein kinase family. As to quaternary structure, interacts with yki. Interacts with jub. Mg(2+) serves as cofactor.

The protein localises to the cytoplasm. Its subcellular location is the cytosol. It localises to the cytoskeleton. It is found in the microtubule organizing center. The protein resides in the centrosome. It catalyses the reaction L-seryl-[protein] + ATP = O-phospho-L-seryl-[protein] + ADP + H(+). The catalysed reaction is L-threonyl-[protein] + ATP = O-phospho-L-threonyl-[protein] + ADP + H(+). Negative regulator of Yorkie (Yki) in the Hippo/SWH (Sav/Wts/Hpo) signaling pathway that plays a pivotal role in organ size control and tumor suppression by restricting proliferation and promoting apoptosis. The core of this pathway is composed of a kinase cascade wherein Hippo (Hpo), in complex with its regulatory protein Salvador (Sav), phosphorylates and activates Warts (Wts) in complex with its regulatory protein Mats, which in turn phosphorylates and inactivates the Yorkie (Yki) oncoprotein. The Hippo/SWH signaling pathway inhibits the activity of the transcriptional complex formed by Scalloped (sd) and Yki and the target genes of this pathway include cyclin-E (cycE), diap1 and bantam. Inhibits nuclear localization of Yki. Regulates salivary gland degradation in a PI3K-dependent manner and Yki- and Sd-independent, mechanism. This is Serine/threonine-protein kinase Warts (wts) from Drosophila melanogaster (Fruit fly).